The sequence spans 247 residues: tRNA pseudouridine synthase A (247 aa).

D52 (nucleophile) is an active-site residue. Y113 lines the substrate pocket.

Belongs to the tRNA pseudouridine synthase TruA family. In terms of assembly, homodimer.

It catalyses the reaction uridine(38/39/40) in tRNA = pseudouridine(38/39/40) in tRNA. Functionally, formation of pseudouridine at positions 38, 39 and 40 in the anticodon stem and loop of transfer RNAs. This is tRNA pseudouridine synthase A from Bartonella henselae (strain ATCC 49882 / DSM 28221 / CCUG 30454 / Houston 1) (Rochalimaea henselae).